The sequence spans 335 residues: 7,8-didemethyl-8-hydroxy-5-deazariboflavin synthase (335 aa).

Residues 1–246 form the Radical SAM core domain; that stretch reads MTYSKNVFIP…QVAPNLIDPK (246 aa). Cys-15, Cys-19, and Cys-22 together coordinate [4Fe-4S] cluster.

The protein belongs to the radical SAM superfamily. CofG family. As to quaternary structure, consists of two subunits, CofG and CofH. [4Fe-4S] cluster is required as a cofactor.

The catalysed reaction is 5-amino-5-(4-hydroxybenzyl)-6-(D-ribitylimino)-5,6-dihydrouracil + S-adenosyl-L-methionine = 7,8-didemethyl-8-hydroxy-5-deazariboflavin + 5'-deoxyadenosine + L-methionine + NH4(+) + H(+). It participates in cofactor biosynthesis; coenzyme F0 biosynthesis. Its function is as follows. Catalyzes the radical-mediated synthesis of 7,8-didemethyl-8-hydroxy-5-deazariboflavin from 5-amino-5-(4-hydroxybenzyl)-6-(D-ribitylimino)-5,6-dihydrouracil. This Methanosarcina mazei (strain ATCC BAA-159 / DSM 3647 / Goe1 / Go1 / JCM 11833 / OCM 88) (Methanosarcina frisia) protein is 7,8-didemethyl-8-hydroxy-5-deazariboflavin synthase.